A 629-amino-acid chain; its full sequence is Methyl-accepting chemotaxis protein PscA (629 aa).

At 1 to 9 (MKNLGFSKK) the chain is on the cytoplasmic side. The chain crosses the membrane as a helical span at residues 10–30 (ILLAAALIVVVAFSVFIVIND). Residues 31–276 (YRQRQSLKSS…AYAMLTEFRT (246 aa)) lie on the Periplasmic side of the membrane. The Cache domain occupies 36–258 (SLKSSVKSEL…QGVATANWYV (223 aa)). Residues 277–297 (SAITAMVVVVMVIILLLGPLI) form a helical membrane-spanning segment. The HAMP domain maps to 298 to 352 (RVLMQPLHQMGRAMRDIADGEGDLTKRLAITSHDEFGALAESFNHFVERIHTSIR). Residues 298–629 (RVLMQPLHQM…LQQLVGSFRI (332 aa)) lie on the Cytoplasmic side of the membrane. The 237-residue stretch at 357 to 593 (TAAQLGEVAT…SINVDITHIN (237 aa)) folds into the Methyl-accepting transducer domain.

It belongs to the methyl-accepting chemotaxis (MCP) protein family.

The protein resides in the cell inner membrane. Functionally, chemotactic-signal transducers respond to changes in the concentration of attractants and repellents in the environment, transduce a signal from the outside to the inside of the cell, and facilitate sensory adaptation through the variation of the level of methylation. PscA recognizes specifically and with high affinity L-Asp, D-Asp and L-Glu. It exerts a double function, in mediating chemotaxis to these amino acids and in modulating cyclic di-GMP (c-di-GMP) levels, causing alterations in biofilm development. Plays a key role in the infection process. It may facilitate bacterial entry into the plant. This Pseudomonas syringae pv. tomato (strain ATCC BAA-871 / DC3000) protein is Methyl-accepting chemotaxis protein PscA.